Here is a 69-residue protein sequence, read N- to C-terminus: ATP synthase F(0) complex subunit e, mitochondrial (69 aa).

An N6-acetyllysine modification is found at Lys34. Ser66 is subject to Phosphoserine.

The protein belongs to the ATPase e subunit family. In terms of assembly, component of the ATP synthase complex composed at least of ATP5F1A/subunit alpha, ATP5F1B/subunit beta, ATP5MC1/subunit c (homooctomer), MT-ATP6/subunit a, MT-ATP8/subunit 8, ATP5ME/subunit e, ATP5MF/subunit f, ATP5MG/subunit g, ATP5MK/subunit k, ATP5MJ/subunit j, ATP5F1C/subunit gamma, ATP5F1D/subunit delta, ATP5F1E/subunit epsilon, ATP5PF/subunit F6, ATP5PB/subunit b, ATP5PD/subunit d, ATP5PO/subunit OSCP. ATP synthase complex consists of a soluble F(1) head domain (subunits alpha(3) and beta(3)) - the catalytic core - and a membrane F(0) domain - the membrane proton channel (subunits c, a, 8, e, f, g, k and j). These two domains are linked by a central stalk (subunits gamma, delta, and epsilon) rotating inside the F1 region and a stationary peripheral stalk (subunits F6, b, d, and OSCP).

It localises to the mitochondrion. Its subcellular location is the mitochondrion inner membrane. Functionally, subunit e, of the mitochondrial membrane ATP synthase complex (F(1)F(0) ATP synthase or Complex V) that produces ATP from ADP in the presence of a proton gradient across the membrane which is generated by electron transport complexes of the respiratory chain. ATP synthase complex consist of a soluble F(1) head domain - the catalytic core - and a membrane F(1) domain - the membrane proton channel. These two domains are linked by a central stalk rotating inside the F(1) region and a stationary peripheral stalk. During catalysis, ATP synthesis in the catalytic domain of F(1) is coupled via a rotary mechanism of the central stalk subunits to proton translocation. In vivo, can only synthesize ATP although its ATP hydrolase activity can be activated artificially in vitro. Part of the complex F(0) domain. The polypeptide is ATP synthase F(0) complex subunit e, mitochondrial (Homo sapiens (Human)).